A 346-amino-acid chain; its full sequence is Elongation factor Ts (346 aa).

The segment at 80–83 (TDFV) is involved in Mg(2+) ion dislocation from EF-Tu.

It belongs to the EF-Ts family.

The protein localises to the cytoplasm. Functionally, associates with the EF-Tu.GDP complex and induces the exchange of GDP to GTP. It remains bound to the aminoacyl-tRNA.EF-Tu.GTP complex up to the GTP hydrolysis stage on the ribosome. This is Elongation factor Ts from Streptococcus thermophilus (strain CNRZ 1066).